Reading from the N-terminus, the 930-residue chain is Zn(2)-C6 fungal-type transcription factor FTF1c (930 aa).

The segment at residues 137-164 (CIACRRKKIRCSGEKPACEHCLCSYIPC) is a DNA-binding region (zn(2)-C6 fungal-type).

It is found in the nucleus. In terms of biological role, zn(2)-C6 fungal-type transcription factor that has a role in the establishment of the fungus within the plant and/or the progress of the disease. Regulates the expression of virulence factors such as SIX1 and SIX6. This is Zn(2)-C6 fungal-type transcription factor FTF1c from Fusarium oxysporum f. sp. lycopersici (strain 4287 / CBS 123668 / FGSC 9935 / NRRL 34936) (Fusarium vascular wilt of tomato).